A 113-amino-acid polypeptide reads, in one-letter code: UPF0342 protein MGAS2096_Spy0691 (113 aa).

The protein belongs to the UPF0342 family.

In Streptococcus pyogenes serotype M12 (strain MGAS2096), this protein is UPF0342 protein MGAS2096_Spy0691.